The sequence spans 938 residues: Histone deacetylase 7 (938 aa).

The tract at residues 1–40 (MHSPGAGCPALQPDTPGSQPQPMDLRVGQRPTVEPPPEPA) is disordered. An interaction with MEF2C region spans residues 1–121 (MHSPGAGCPA…LAEVILKKQQ (121 aa)). Transcription repression regions lie at residues 2 to 254 (HSPG…DGDR) and 241 to 533 (GPNP…EHAG). The interaction with MEF2A stretch occupies residues 72–172 (SMDPPMPELQ…LPTEPPEHFP (101 aa)). Ser132 is modified (phosphoserine). Disordered stretches follow at residues 155–280 (SFLP…HHGL), 331–361 (SGSGLHRPLNRTRSEPLPPSATASPLLAPLQ), 373–463 (LIKP…DSVL), and 472–491 (RPLSRTQSSPAAPVSLLSPE). Phosphoserine; by MARK2, MARK3 and PKD/PRKD1 is present on Ser178. Residues 190–204 (KSLERRKNPLLRKES) are compositionally biased toward basic and acidic residues. The residue at position 204 (Ser204) is a Phosphoserine; by PKD/PRKD2. Positions 220–235 (SSPSSSSTPASGCSSP) are enriched in low complexity. Ser344 carries the phosphoserine; by PKD/PRKD1 modification. A phosphoserine mark is found at Ser350 and Ser398. A compositionally biased stretch (low complexity) spans 350 to 361 (SATASPLLAPLQ). Low complexity-rich tracts occupy residues 429 to 448 (GRGSISLQQHQQVPPWEQQH) and 479 to 491 (SSPAAPVSLLSPE). Position 479 is a phosphoserine; by PKD/PRKD1 (Ser479). Ser480 is subject to Phosphoserine. Residues 505–852 (PATGLVYDSV…VAALLGNKVD (348 aa)) form a histone deacetylase region. Residues Cys520, Cys522, and His528 each coordinate Zn(2+). Ser582 is modified (phosphoserine). Cys605 is a binding site for Zn(2+). His657 is a catalytic residue. Positions 864–938 (NLSAIRSLEA…LVEEEEPMNL (75 aa)) are interaction with SIN3A. The Nuclear export signal signature appears at 904 to 938 (AEVEAVTALASLSVGILAEDRPSERLVEEEEPMNL).

It belongs to the histone deacetylase family. HD type 2 subfamily. As to quaternary structure, interacts with HDAC1, HDAC2, HDAC3, HDAC4, HDAC5, NCOR1, NCOR2, SIN3A, SIN3B, RBBP4, RBBP7, MTA1L1, SAP30 and MBD3. Interacts with KAT5 and EDNRA. Interacts with the 14-3-3 protein YWHAE, MEF2A, MEF2B and MEF2C. Interacts with ZMYND15. Interacts with KDM5B. Interacts with PML. Interacts with FOXP3. Interacts with RARA. In terms of processing, may be phosphorylated by CaMK1. Phosphorylated by the PKC kinases PKN1 and PKN2, impairing nuclear import. Phosphorylation at Ser-178 by MARK2, MARK3 and PRKD1 promotes interaction with 14-3-3 proteins and export from the nucleus. Phosphorylation at Ser-178 is a prerequisite for phosphorylation at Ser-204. Highly expressed in heart and lung. Expressed at intermediate level in muscle.

The protein localises to the nucleus. It is found in the cytoplasm. It catalyses the reaction N(6)-acetyl-L-lysyl-[histone] + H2O = L-lysyl-[histone] + acetate. It carries out the reaction N(6)-acetyl-L-lysyl-[protein] + H2O = L-lysyl-[protein] + acetate. Its activity is inhibited by Trichostatin A (TSA), a known histone deacetylase inhibitor. In terms of biological role, responsible for the deacetylation of lysine residues on the N-terminal part of the core histones (H2A, H2B, H3 and H4). Histone deacetylation gives a tag for epigenetic repression and plays an important role in transcriptional regulation, cell cycle progression and developmental events. Histone deacetylases act via the formation of large multiprotein complexes. Involved in muscle maturation by repressing transcription of myocyte enhancer factors such as MEF2A, MEF2B and MEF2C. During muscle differentiation, it shuttles into the cytoplasm, allowing the expression of myocyte enhancer factors. Positively regulates the transcriptional repressor activity of FOXP3. Serves as a corepressor of RARA, causing its deacetylation and inhibition of RARE DNA element binding. In association with RARA, plays a role in the repression of microRNA-10a and thereby in the inflammatory response. Also acetylates non-histone proteins, such as ALKBH5. This chain is Histone deacetylase 7 (Hdac7), found in Mus musculus (Mouse).